The chain runs to 222 residues: 4'-phosphopantetheinyl transferase Npt (222 aa).

Mg(2+)-binding residues include aspartate 105, glutamate 107, and glutamate 147.

The protein belongs to the P-Pant transferase superfamily. As to quaternary structure, monomer. The cofactor is Mg(2+).

It catalyses the reaction apo-[ACP] + CoA = holo-[ACP] + adenosine 3',5'-bisphosphate + H(+). Functionally, catalyzes the transfer of the 4'-phosphopantetheine moiety from coenzyme A to a serine residue in the acyl-carrier domain of carboxylic acid reductase Car, thus converting apo-Car to fully active holo-Car. Is probably also responsible for the activation of other proteins with phosphopantetheine attachment sites. This Nocardia iowensis protein is 4'-phosphopantetheinyl transferase Npt (npt).